We begin with the raw amino-acid sequence, 153 residues long: Protein SREK1IP1 (153 aa).

The CCHC-type zinc finger occupies 13-30 (AGCRKCGYPGHLTFECRN). The tract at residues 44–153 (VSSTSSEDSD…SPNRSEVTKK (110 aa)) is disordered. Ser52 bears the Phosphoserine mark. Residues 66-84 (QEKRINEEEEKKKEKSREK) are compositionally biased toward basic and acidic residues. Residues 85-94 (IKLKKKRKRS) are compositionally biased toward basic residues. Residues Ser96 and Ser97 each carry the phosphoserine modification. Basic residues predominate over residues 106-141 (QKKQKYQKKEKKKEKKNKSKKGKHHKKEKKKRKKEK).

Interacts with SREK1/SFRS12.

Functionally, possible splicing regulator involved in the control of cellular survival. In Rattus norvegicus (Rat), this protein is Protein SREK1IP1 (Srek1ip1).